The chain runs to 507 residues: UDP-N-acetylglucosamine 1-carboxyvinyltransferase 1 (507 aa).

Phosphoenolpyruvate is bound at residue 41-42; that stretch reads KN. R112 is a binding site for UDP-N-acetyl-alpha-D-glucosamine. The active-site Proton donor is C136. C136 carries the 2-(S-cysteinyl)pyruvic acid O-phosphothioketal modification. UDP-N-acetyl-alpha-D-glucosamine contacts are provided by residues 141–145, D328, and L350; that span reads RPIDL.

This sequence belongs to the EPSP synthase family. MurA subfamily.

It localises to the cytoplasm. It carries out the reaction phosphoenolpyruvate + UDP-N-acetyl-alpha-D-glucosamine = UDP-N-acetyl-3-O-(1-carboxyvinyl)-alpha-D-glucosamine + phosphate. It participates in cell wall biogenesis; peptidoglycan biosynthesis. Cell wall formation. Adds enolpyruvyl to UDP-N-acetylglucosamine. The polypeptide is UDP-N-acetylglucosamine 1-carboxyvinyltransferase 1 (Legionella pneumophila (strain Lens)).